Reading from the N-terminus, the 251-residue chain is Putative F-box protein PP2-B12 (251 aa).

One can recognise an F-box domain in the interval 1–46 (MNFLDLPEECIATMISFTSPFDACRISAVSKLLRSAADSNTTWERF).

The polypeptide is Putative F-box protein PP2-B12 (PP2B12) (Arabidopsis thaliana (Mouse-ear cress)).